The primary structure comprises 20 residues: Thylakoid lumenal 20 kDa protein (20 aa).

Positions 1 to 20 (RDVDVGSFLPKSPSDPSMVL) are disordered.

It is found in the plastid. Its subcellular location is the chloroplast thylakoid lumen. The polypeptide is Thylakoid lumenal 20 kDa protein (Spinacia oleracea (Spinach)).